An 81-amino-acid polypeptide reads, in one-letter code: CLAVATA3/ESR (CLE)-related protein 25 (81 aa).

Residues 1 to 30 form the signal peptide; sequence MGGNGIRALVGVIASLGLIVFLLVGILANS. The disordered stretch occupies residues 57–81; the sequence is KRKVPNGPDPIHNRKAETSRRPPRV. 2 positions are modified to hydroxyproline: Pro-61 and Pro-64. The O-linked (Ara...) hydroxyproline glycan is linked to Pro-64. The span at 67 to 81 shows a compositional bias: basic and acidic residues; it reads IHNRKAETSRRPPRV.

The protein belongs to the CLV3/ESR signal peptide family. In terms of processing, the O-glycosylation (arabinosylation) of the hydroxyproline Pro-64 enhances binding affinity of the CLE25p peptide for its receptor. As to expression, mostly expressed in flowers and siliques, and, to a lower extent, in roots, stems, apex, seedlings, leaves and pollen.

The protein resides in the secreted. It localises to the extracellular space. Extracellular signal peptide that regulates cell fate. Represses root apical meristem maintenance. Regulates the transition of protophloem cells from proliferation to differentiation, thus impinging on postembryonic growth capacity of the root meristem; this signaling pathway requires CRN and CLV2. This chain is CLAVATA3/ESR (CLE)-related protein 25, found in Arabidopsis thaliana (Mouse-ear cress).